Here is a 90-residue protein sequence, read N- to C-terminus: Small ribosomal subunit protein bS18 (90 aa).

A disordered region spans residues 1–23 (MKPMRQKNTRAQGNKSISNALAS). Over residues 9-21 (TRAQGNKSISNAL) the composition is skewed to polar residues.

This sequence belongs to the bacterial ribosomal protein bS18 family. As to quaternary structure, part of the 30S ribosomal subunit. Forms a tight heterodimer with protein bS6.

Binds as a heterodimer with protein bS6 to the central domain of the 16S rRNA, where it helps stabilize the platform of the 30S subunit. This is Small ribosomal subunit protein bS18 from Chlorobium luteolum (strain DSM 273 / BCRC 81028 / 2530) (Pelodictyon luteolum).